We begin with the raw amino-acid sequence, 193 residues long: Sarcoplasmic calcium-binding protein, alpha chain (193 aa).

2 igE-binding epitope regions span residues 10–36 (KYVV…LAVR) and 49–72 (DAYA…ADFN). EF-hand domains follow at residues 16-40 (MYDI…NTLI), 57-92 (IMRN…HCQG), and 101-136 (AFKV…RSAF). Positions 18, 20, 22, 29, 70, 72, 74, 76, 81, 114, 116, 118, 120, and 125 each coordinate Ca(2+). The tract at residues 130–147 (CITRSAFAEVKEIDDAYN) is igE-binding epitope.

In terms of assembly, SCPs from crayfish, lobster, and shrimp are polymorphic dimers; three isotypes (alpha-alpha, alpha-beta, and beta-beta) have been identified. In terms of tissue distribution, expressed in tail muscle (at protein level).

Like parvalbumins, SCPs seem to be more abundant in fast contracting muscles, but no functional relationship can be established from this distribution. This chain is Sarcoplasmic calcium-binding protein, alpha chain, found in Penaeus vannamei (Whiteleg shrimp).